Reading from the N-terminus, the 235-residue chain is Ribitol-5-phosphate cytidylyltransferase (235 aa).

CTP is bound by residues 7-10 (LAGG), 82-88 (GADRNTS), and S113.

The protein belongs to the IspD/TarI cytidylyltransferase family. TarI subfamily.

The catalysed reaction is D-ribitol 5-phosphate + CTP + H(+) = CDP-L-ribitol + diphosphate. The protein operates within cell wall biogenesis; poly(ribitol phosphate) teichoic acid biosynthesis. Its function is as follows. Catalyzes the transfer of the cytidylyl group of CTP to D-ribitol 5-phosphate. The protein is Ribitol-5-phosphate cytidylyltransferase of Streptococcus pneumoniae (strain ATCC 700669 / Spain 23F-1).